Reading from the N-terminus, the 298-residue chain is MASNNSRTNSRANYSNEIHDLSTVQNGTMPTMYYGEKAIADFFPPHLLKKVVSEVVATFLLVFMTCGAAGISGSDLSRISQLGQSIAGGLIVTVMIYAVGHISGAHMNPAVTLAFAVFRHFPWIQVPFYWAAQFTGAICASFVLKAVIHPVDVIGTTTPVGPHWHSLVVEVIVTFNMMFVTLAVATDTRAVGELAGLAVGSAVCITSIFAGAISGGSMNPARTLGPALASNKFDGLWIYFLGPVMGTLSGAWTYTFIRFEDTPKEGSSQKLSSFKLRRLRSQQSIAADDVDEMENIQV.

3 N-linked (GlcNAc...) asparagine glycosylation sites follow: Asn-4, Asn-13, and Asn-26. The next 2 membrane-spanning stretches (helical) occupy residues 51 to 71 and 85 to 105; these read VVSEVVATFLLVFMTCGAAGI and SIAGGLIVTVMIYAVGHISGA. An NPA 1 motif is present at residues 108 to 110; that stretch reads NPA. A run of 3 helical transmembrane segments spans residues 124–144, 166–186, and 194–214; these read IQVPFYWAAQFTGAICASFVL, SLVVEVIVTFNMMFVTLAVAT, and LAGLAVGSAVCITSIFAGAIS. The short motif at 219–221 is the NPA 2 element; that stretch reads NPA. The chain crosses the membrane as a helical span at residues 237-257; that stretch reads WIYFLGPVMGTLSGAWTYTFI.

This sequence belongs to the MIP/aquaporin (TC 1.A.8) family. NIP (TC 1.A.8.12) subfamily. In terms of tissue distribution, mainly expressed in the roots. In roots, it localizes in the main and lateral roots, but not in root hairs. Within a root, it localizes on the plasma membrane of the distal side of both exodermis and endodermis, where casparian strips exist (at protein level). Expressed low levels in leaves and anthers.

Its subcellular location is the cell membrane. Silicon influx transporter responsible for silicon transport from the external solution to the root cells. Is coupled with the silicon efflux transporter LSI2 in both exodermal and endodermal root cells for an efficient silicon transport across the cells into the stele. Silicon is beneficial to plant growth and helps plants to overcome abiotic and biotic stresses by preventing lodging (falling over) and increasing resistance to pests and diseases, as well as other stresses. Is coupled with LSI2 transporter in roots for efficient uptake of arsenite, which is further dispatched in shoots and grains. Mediates uptake of methylated arsenic species in roots. This Oryza sativa subsp. japonica (Rice) protein is Aquaporin NIP2-1.